We begin with the raw amino-acid sequence, 157 residues long: Crossover junction endodeoxyribonuclease RuvC (157 aa).

Catalysis depends on residues aspartate 7, glutamate 70, and aspartate 142. Aspartate 7, glutamate 70, and aspartate 142 together coordinate Mg(2+).

Belongs to the RuvC family. In terms of assembly, homodimer which binds Holliday junction (HJ) DNA. The HJ becomes 2-fold symmetrical on binding to RuvC with unstacked arms; it has a different conformation from HJ DNA in complex with RuvA. In the full resolvosome a probable DNA-RuvA(4)-RuvB(12)-RuvC(2) complex forms which resolves the HJ. Requires Mg(2+) as cofactor.

It is found in the cytoplasm. The enzyme catalyses Endonucleolytic cleavage at a junction such as a reciprocal single-stranded crossover between two homologous DNA duplexes (Holliday junction).. Its function is as follows. The RuvA-RuvB-RuvC complex processes Holliday junction (HJ) DNA during genetic recombination and DNA repair. Endonuclease that resolves HJ intermediates. Cleaves cruciform DNA by making single-stranded nicks across the HJ at symmetrical positions within the homologous arms, yielding a 5'-phosphate and a 3'-hydroxyl group; requires a central core of homology in the junction. The consensus cleavage sequence is 5'-(A/T)TT(C/G)-3'. Cleavage occurs on the 3'-side of the TT dinucleotide at the point of strand exchange. HJ branch migration catalyzed by RuvA-RuvB allows RuvC to scan DNA until it finds its consensus sequence, where it cleaves and resolves the cruciform DNA. This Synechococcus sp. (strain RCC307) protein is Crossover junction endodeoxyribonuclease RuvC.